Consider the following 248-residue polypeptide: MSLFPSLPLLLLSMVAASYSETVTCEDAQKTCPAVIACSSPGINGFPGKDGRDGTKGEKGEPGQGLRGLQGPPGKLGPPGNPGPSGSPGAKGQKGDPGASPDCDSSLANPERKTLQTEINRIKKWVTFSLGKQVGKKLFLTNGETMTFDKVKALCAQFQASVATPMNQAENRALQSLVKEEAFLGITDEETEGQFVDLTGRRLTYTNWNKGEPNNADSREDCVVLLRSGGWNDVPCSSSHLVICEFPV.

The signal sequence occupies residues 1 to 20 (MSLFPSLPLLLLSMVAASYS). A Collagen-like domain is found at 42–99 (GINGFPGKDGRDGTKGEKGEPGQGLRGLQGPPGKLGPPGNPGPSGSPGAKGQKGDPGA). The disordered stretch occupies residues 43-112 (INGFPGKDGR…CDSSLANPER (70 aa)). Proline 47 is modified (4-hydroxyproline). Residues 49–61 (KDGRDGTKGEKGE) show a composition bias toward basic and acidic residues. 4-hydroxyproline is present on residues proline 73, proline 79, proline 82, and proline 88. The stretch at 112-130 (RKTLQTEINRIKKWVTFSL) forms a coiled coil. One can recognise a C-type lectin domain in the interval 134 to 245 (VGKKLFLTNG…CSSSHLVICE (112 aa)). Cystine bridges form between cysteine 155-cysteine 244 and cysteine 222-cysteine 236.

Oligomeric complex of 3 or more homotrimers. Interacts with MASP1 and MASP2. Interacts with MEP1A and MEP1B and may inhibit their catalytic activity. Hydroxylation on proline residues within the sequence motif, GXPG, is most likely to be 4-hydroxy as this fits the requirement for 4-hydroxylation in vertebrates.

The protein localises to the secreted. Functionally, calcium-dependent lectin involved in innate immune defense. Binds mannose, fucose and N-acetylglucosamine on different microorganisms and activates the lectin complement pathway. Binds to late apoptotic cells, as well as to apoptotic blebs and to necrotic cells, but not to early apoptotic cells, facilitating their uptake by macrophages. This Callithrix jacchus (White-tufted-ear marmoset) protein is Mannose-binding protein C (MBL2).